Reading from the N-terminus, the 793-residue chain is Coiled-coil domain-containing protein 175 (793 aa).

Coiled coils occupy residues 131–163 (EINTIKMRITRTENEIELLKKKITDLTKYNEAL), 205–377 (KRED…VLSE), 431–535 (KTVY…MLMK), 562–679 (LPQL…KYRE), and 716–745 (LVDNGEETLQDINNLTDKLRERDEKMQHVS).

The chain is Coiled-coil domain-containing protein 175 (CCDC175) from Homo sapiens (Human).